A 578-amino-acid polypeptide reads, in one-letter code: MAAAAAGGLPGKGHDISLAALRRHDPYISRIVDVASQVALYTFGHRANEWEKTGVEGTLFVYTRSASPKHGFTIMNRLSMENRTEPITKDLDFQLQNPFLLYRNGTLSIYGIWFYDKEECQRIAKLMKNLTQSEQLKACHGAGSSPVTLSSGEGQEVDILQMLTKAKDEYTKCKTCSEPKQMTNSSAICDNPKLIKPVPVRPSSSQRLQGPAPSKTSDPEPQHLSLTALFGKQDKAPCQETVKPSRTFAHHHHHHHQQQQETRPVHHGVACSLSCEEPRKLSLPVEKQLCPAIQKLMLGSPGLHPLPQHPEQWSCKSGSPSPAGGILPGPVQLGSPWNGRVAHCTQSTCRGHKLLEQLQGAPGAVHKYNPCAPTGPAVATQVAPGQSVAQSQLVYFSGPLQPPAPGHQALRKEQGALPAQAVSLSGSQESSPTVLPTQELLRKLQVVHQEQQAAPRPALAARFPVSAQGSGTEKPLEAWVSKTASMEKQAPLLQSTCAPLRETDNGLMALGGQELPAASSNLLLPLQNWESSTVASRPLTRLQLQEALLNLIQNDDNFLSIIYEAYLFSVTQAAMRTT.

Ala2 carries the N-acetylalanine modification. Phosphoserine is present on residues Ser144 and Ser145. 2 disordered regions span residues 187–222 (AICDNPKLIKPVPVRPSSSQRLQGPAPSKTSDPEPQ) and 246–265 (RTFAHHHHHHHQQQQETRPV). Residues 248-257 (FAHHHHHHHQ) show a composition bias toward basic residues. 2 positions are modified to phosphoserine: Ser274 and Ser335. Phosphothreonine is present on Thr380.

This sequence belongs to the DCP1 family. In terms of assembly, interacts with DCP1A.

Its subcellular location is the cytoplasm. It localises to the nucleus. The catalysed reaction is a 5'-end (N(7)-methyl 5'-triphosphoguanosine)-ribonucleoside in mRNA + H2O = N(7)-methyl-GDP + a 5'-end phospho-ribonucleoside in mRNA + 2 H(+). Its function is as follows. May play a role in the degradation of mRNAs, both in normal mRNA turnover and in nonsense-mediated mRNA decay. May remove the 7-methyl guanine cap structure from mRNA molecules, yielding a 5'-phosphorylated mRNA fragment and 7m-GDP. This is mRNA-decapping enzyme 1B (Dcp1b) from Mus musculus (Mouse).